Here is a 171-residue protein sequence, read N- to C-terminus: Terminase, small subunit (171 aa).

This sequence belongs to the P23virus small terminase family. In terms of assembly, homononamer; forms a ring-like structure through which genomic DNA is translocated into the capsid. Heterodimer with the terminase large subunit; the active complex is probably heterooligomeric.

The terminase small subunit binds to the packaging initiation site and regulates the ATPase activity of the terminase large subunit. The terminase lies at a unique vertex of the procapsid and is composed of two subunits, a small terminase subunit involved in viral DNA recognition (packaging sequence), and a large terminase subunit. Both terminase subunits heterooligomerize and are docked on the portal protein to form the packaging machine. The polypeptide is Terminase, small subunit (Thermus virus P23-45 (Thermus thermophilus phage P23-45)).